The chain runs to 948 residues: Alanine--tRNA ligase (948 aa).

Histidine 638, histidine 642, cysteine 739, and histidine 743 together coordinate Zn(2+).

It belongs to the class-II aminoacyl-tRNA synthetase family. Requires Zn(2+) as cofactor.

The protein localises to the cytoplasm. It catalyses the reaction tRNA(Ala) + L-alanine + ATP = L-alanyl-tRNA(Ala) + AMP + diphosphate. Functionally, catalyzes the attachment of alanine to tRNA(Ala) in a two-step reaction: alanine is first activated by ATP to form Ala-AMP and then transferred to the acceptor end of tRNA(Ala). Also edits incorrectly charged Ser-tRNA(Ala) and Gly-tRNA(Ala) via its editing domain. This is Alanine--tRNA ligase from Paracidovorax citrulli (strain AAC00-1) (Acidovorax citrulli).